We begin with the raw amino-acid sequence, 146 residues long: Anti-sigma F factor (146 aa).

Belongs to the anti-sigma-factor family.

It catalyses the reaction L-seryl-[protein] + ATP = O-phospho-L-seryl-[protein] + ADP + H(+). The enzyme catalyses L-threonyl-[protein] + ATP = O-phospho-L-threonyl-[protein] + ADP + H(+). In terms of biological role, binds to sigma F and blocks its ability to form an RNA polymerase holoenzyme (E-sigma F). Phosphorylates SpoIIAA on a serine residue. This phosphorylation may enable SpoIIAA to act as an anti-anti-sigma factor that counteracts SpoIIAB and thus releases sigma F from inhibition. The protein is Anti-sigma F factor of Bacillus licheniformis (strain ATCC 14580 / DSM 13 / JCM 2505 / CCUG 7422 / NBRC 12200 / NCIMB 9375 / NCTC 10341 / NRRL NRS-1264 / Gibson 46).